A 391-amino-acid chain; its full sequence is Succinate--CoA ligase [ADP-forming] subunit beta (391 aa).

The 237-residue stretch at lysine 9–glutamate 245 folds into the ATP-grasp domain. ATP-binding positions include lysine 46, glycine 53–glycine 55, glutamate 99, alanine 102, and glutamate 107. Positions 200 and 214 each coordinate Mg(2+). Substrate contacts are provided by residues asparagine 265 and glycine 322 to valine 324.

Belongs to the succinate/malate CoA ligase beta subunit family. As to quaternary structure, heterotetramer of two alpha and two beta subunits. It depends on Mg(2+) as a cofactor.

The enzyme catalyses succinate + ATP + CoA = succinyl-CoA + ADP + phosphate. It carries out the reaction GTP + succinate + CoA = succinyl-CoA + GDP + phosphate. Its pathway is carbohydrate metabolism; tricarboxylic acid cycle; succinate from succinyl-CoA (ligase route): step 1/1. Succinyl-CoA synthetase functions in the citric acid cycle (TCA), coupling the hydrolysis of succinyl-CoA to the synthesis of either ATP or GTP and thus represents the only step of substrate-level phosphorylation in the TCA. The beta subunit provides nucleotide specificity of the enzyme and binds the substrate succinate, while the binding sites for coenzyme A and phosphate are found in the alpha subunit. In Sulfurovum sp. (strain NBC37-1), this protein is Succinate--CoA ligase [ADP-forming] subunit beta.